The sequence spans 367 residues: Aminomethyltransferase (367 aa).

This sequence belongs to the GcvT family. In terms of assembly, the glycine cleavage system is composed of four proteins: P, T, L and H.

It carries out the reaction N(6)-[(R)-S(8)-aminomethyldihydrolipoyl]-L-lysyl-[protein] + (6S)-5,6,7,8-tetrahydrofolate = N(6)-[(R)-dihydrolipoyl]-L-lysyl-[protein] + (6R)-5,10-methylene-5,6,7,8-tetrahydrofolate + NH4(+). The glycine cleavage system catalyzes the degradation of glycine. The polypeptide is Aminomethyltransferase (Shouchella clausii (strain KSM-K16) (Alkalihalobacillus clausii)).